Consider the following 325-residue polypeptide: MSHGEETELLLDPKEERFVLLPIKYHDIWKMYKKAESSFWTVEEVSLDKDIDDWGKLNAKERHFISYVLAFFAASDGIVNLNLVERFSTEVKVLEARFFYGFQMAIENIHSEMYSLLIDTYIRDNDEKNFLFDAIRTIPSVKEKADWAIRWIEDKNSDFATRLVAFACVEGIFFSGAFASIFWLKKRGLMPGLTFSNELISRDEGLHCEFACLLHYHLKKKCNRIKEVVMDAVEIEKKFLSESLPVNLIGMNCNLMCRYIEFVADRLLENLGEERVYNATNPFDFMENISLVGKTNFFDKRESQYQKAFVGIENGNDSFRIDVDF.

Fe cation is bound by residues D76, E107, and H110. The active site involves Y114. Fe cation is bound by residues E170, E204, and H207.

It belongs to the ribonucleoside diphosphate reductase small chain family. In terms of assembly, heterodimer of a large and a small subunit. Fe cation is required as a cofactor.

It catalyses the reaction a 2'-deoxyribonucleoside 5'-diphosphate + [thioredoxin]-disulfide + H2O = a ribonucleoside 5'-diphosphate + [thioredoxin]-dithiol. Its function is as follows. Provides the precursors necessary for DNA synthesis. Catalyzes the biosynthesis of deoxyribonucleotides from the corresponding ribonucleotides. This chain is Ribonucleoside-diphosphate reductase small chain, found in Encephalitozoon cuniculi (strain GB-M1) (Microsporidian parasite).